The primary structure comprises 171 residues: S-ribosylhomocysteine lyase (171 aa).

Positions 54, 58, and 128 each coordinate Fe cation.

It belongs to the LuxS family. As to quaternary structure, homodimer. Fe cation is required as a cofactor.

The enzyme catalyses S-(5-deoxy-D-ribos-5-yl)-L-homocysteine = (S)-4,5-dihydroxypentane-2,3-dione + L-homocysteine. Involved in the synthesis of autoinducer 2 (AI-2) which is secreted by bacteria and is used to communicate both the cell density and the metabolic potential of the environment. The regulation of gene expression in response to changes in cell density is called quorum sensing. Catalyzes the transformation of S-ribosylhomocysteine (RHC) to homocysteine (HC) and 4,5-dihydroxy-2,3-pentadione (DPD). The protein is S-ribosylhomocysteine lyase of Cronobacter sakazakii (strain ATCC BAA-894) (Enterobacter sakazakii).